A 354-amino-acid polypeptide reads, in one-letter code: Guanine nucleotide-binding protein G(t) subunit alpha-3 (354 aa).

Residues 1 to 26 are disordered; it reads MGIGISSESKESAKRSKELEKKLQED. The N-myristoyl glycine moiety is linked to residue glycine 2. Residues 8–26 are compositionally biased toward basic and acidic residues; that stretch reads ESKESAKRSKELEKKLQED. The G-alpha domain maps to 32–354; it reads RTVKLLLLGA…KENLKDCGLF (323 aa). The segment at 35–48 is G1 motif; it reads KLLLLGAGESGKST. Residues 40-47, 175-181, 200-204, 269-272, and alanine 326 contribute to the GTP site; these read GAGESGKS, LHSRVKT, DVGGQ, and NKKD. Residues serine 47 and threonine 181 each coordinate Mg(2+). The interval 173–181 is G2 motif; sequence DVLHSRVKT. Residues 196–205 are G3 motif; it reads FRMFDVGGQR. The segment at 265–272 is G4 motif; the sequence is VLFLNKKD. Residues 324-329 are G5 motif; it reads TCATDT.

This sequence belongs to the G-alpha family. G(i/o/t/z) subfamily. G proteins are composed of 3 units; alpha, beta and gamma, respectively GNAT3, GNB1 and GNG13 for Gustducin heterotrimer for bitter taste transduction. The alpha chain contains the guanine nucleotide binding site. Component of the TAS2R14-GNAT3 complex, consisting of TAS2R14, GNAT3, GNB1 and GNG2; within the complex interacts with TAS2R14; this complex plays a role in the perception of bitterness. Gustducin heterotrimer may also be composed of GNAT3, GNB3 and GNG13. In terms of tissue distribution, expressed in epithelial cells of taste buds of the circumvallate, foliate and fungiform. Detected in various region of the respiratory track. Expressed also in spermatozoa.

The protein resides in the cytoplasm. Functionally, guanine nucleotide-binding protein (G protein) alpha subunit playing a prominent role in bitter and sweet taste transduction as well as in umami (monosodium glutamate, monopotassium glutamate, and inosine monophosphate) taste transduction. The chain is Guanine nucleotide-binding protein G(t) subunit alpha-3 (GNAT3) from Bos taurus (Bovine).